Consider the following 313-residue polypeptide: Syndecan-1 (313 aa).

Positions 1-22 (MRRAALWLWLCALALRLQPALP) are cleaved as a signal peptide. Residues 23–257 (QIVTANVPPE…GLLDRKEVLG (235 aa)) lie on the Extracellular side of the membrane. 2 disordered regions span residues 27 to 58 (ANVP…MTLS) and 95 to 186 (AGEK…VEDG). Residues 32-42 (EDQDGSGDDSD) show a composition bias toward acidic residues. A glycan (O-linked (Xyl...) (chondroitin sulfate) serine) is linked at S37. N43 carries N-linked (GlcNAc...) asparagine glycosylation. 2 O-linked (Xyl...) (heparan sulfate) serine glycosylation sites follow: S45 and S47. Positions 97–129 (EKPEEGEPVAHVEAEPDFTARDKEKEATTRPRE) are enriched in basic and acidic residues. Low complexity predominate over residues 135-154 (VTQQASTAARATTAQASVTS). 2 O-linked (Xyl...) (chondroitin sulfate) serine glycosylation sites follow: S209 and S219. Residues 258–278 (GVIAGGLVGLIFAVCLVAFML) form a helical membrane-spanning segment. The Cytoplasmic portion of the chain corresponds to 279-313 (YRMKKKDEGSYSLEEPKQANGGAYQKPTKQEEFYA). Over residues 286–295 (EGSYSLEEPK) the composition is skewed to basic and acidic residues. Residues 286–313 (EGSYSLEEPKQANGGAYQKPTKQEEFYA) form a disordered region. Residue S288 is modified to Phosphoserine.

The protein belongs to the syndecan proteoglycan family. Interacts with CDCP1. Interacts (via C-terminus) with TIAM1 (via PDZ domain). Interacts with MDK. Shedding is enhanced by a number of factors such as heparanase, thrombin or EGF. Also by stress and wound healing. PMA-mediated shedding is inhibited by TIMP3.

The protein resides in the membrane. Its subcellular location is the secreted. It localises to the extracellular exosome. Its function is as follows. Cell surface proteoglycan that contains both heparan sulfate and chondroitin sulfate and that links the cytoskeleton to the interstitial matrix. Regulates exosome biogenesis in concert with SDCBP and PDCD6IP. Able to induce its own expression in dental mesenchymal cells and also in the neighboring dental epithelial cells via an MSX1-mediated pathway. The polypeptide is Syndecan-1 (Rattus norvegicus (Rat)).